A 634-amino-acid polypeptide reads, in one-letter code: MATEISTRGRQRAIGHEEYSLYSSLSEEELLQMAIEQSLADKTRGPTPAEASASSQTNHQPGHFHPWTRSPSSPENPPARAPLGLFQGVMQKYSSNLFKTSQMAAMDPVLKAIKEGDEEALKIMIQDGKNLAEPNKEGWLPLHEAAYYGQLGCLKVLQQAYPGTIDQRTLQEETALYLATCREHLDCLLSLLQAGAEPDISNKSRETPLYKACERKNAEAVRILVRYNADANHRCNRGWTALHESVSRNDLEVMEILVSGGAKVEAKNVYSITPLFVAAQSGQLEALRFLAKHGADINTQASDSASALYEASKNEHEDVVEFLLSQGADANKANKDGLLPLHVASKKGNYRIVQMLLPVTSRTRVRRSGISPLHLAAERNHDAVLEALLAARFDVNAPLAPERARLYEDRRSSALYFAVVNNNVYATELLLLAGADPNRDVISPLLVAIRHGCLRTMQLLLDHGANIDAYIATHPTAFPATIMFAMKCLSLLKFLMDLGCDGEPCFSCLYGNGPHPPAPRPGRFHDAPVDDKAPSVVQFCEFLSAPEVSRWAGPIIDVLLDYVGNVQLCSRLKEHIDSFEDWAVIKEKAEPPRPLAHLCRLRVRKAIGKYRIKLLDTLPLPGRLIRYLKYENTQ.

The region spanning 26-45 (SEEELLQMAIEQSLADKTRG) is the UIM domain. The segment at 36–82 (EQSLADKTRGPTPAEASASSQTNHQPGHFHPWTRSPSSPENPPARAP) is disordered. ANK repeat units follow at residues 104–133 (AAMD…NLAE), 137–167 (EGWL…TIDQ), 171–200 (QEET…EPDI), 204–233 (SRET…DANH), 237–266 (RGWT…KVEA), 270–299 (YSIT…DINT), 303–332 (DSAS…DANK), 336–365 (DGLL…RTRV), 368–397 (SGIS…DVNA), 410–439 (RRSS…DPNR), 440–469 (DVIS…NIDA), and 476–504 (TAFP…DGEP). Ser-371 bears the Phosphoserine mark. One can recognise an SOCS box domain in the interval 580–634 (EDWAVIKEKAEPPRPLAHLCRLRVRKAIGKYRIKLLDTLPLPGRLIRYLKYENTQ).

The protein belongs to the ankyrin SOCS box (ASB) family. In terms of assembly, component of a probable ECS E3 ubiquitin-protein ligase complex which contains CUL5, either RBX1 or RNF7/RBX2, Elongin BC complex (ELOB and ELOC) and ASB2. Interacts with SKP2. Through its interaction with SKP2, likely to bridge the formation of dimeric E3-ubiquitin-protein ligase complexes composed of an ECS complex and an SCF(SKP2) complex. Interacts with JAK2; the interaction targets JAK2 for Notch-mediated proteasomal degradation. Interacts with TCF3/E2A; the interaction is mediated by SKP2 and targets TCF3 for Notch-mediated proteasomal degradation. Interacts with DES. Monoubiquitinated. In terms of processing, not monoubiquitinated. Post-translationally, phosphorylation at Ser-371 is required for association with FLNA and subsequent FLNA degradation. In terms of tissue distribution, highest expression in muscle, heart and spleen. Highly expressed in cells of the first and second heart fields in the developing embryonic heart. At 9.5 dpc, robust expression predominantly in the left and right ventricles (RV) and to a lower extent in inflow and outflow tracts. At 10.5 and 11.5 dpc, expression is restricted to the myocardium with no expression observed in the endocardium. As to expression, not expressed in immature dendritic cells. Highly expressed in adult skeletal muscle with very low levels in adult bone marrow. Expressed in immature dendritic cells and in primary dendritic cells derived from the spleen. Highly expressed in adult bone marrow with negligible levels in adult skeletal muscle. Expressed at higher levels in T helper type 2 (Th2) cells than in regulatory T (Treg) cells, type 1 helper T (Th1) cells and T helper 17 (Th17) cells.

It is found in the cytoplasm. The protein localises to the cytoskeleton. Its subcellular location is the stress fiber. It localises to the myofibril. The protein resides in the sarcomere. It is found in the z line. Its pathway is protein modification; protein ubiquitination. In terms of biological role, substrate-recognition component of a SCF-like ECS (Elongin-Cullin-SOCS-box protein) E3 ubiquitin-protein ligase complex which mediates the ubiquitination and subsequent proteasomal degradation of target proteins. Mediates Notch-induced ubiquitination and degradation of substrates including TCF3/E2A and JAK2. Required during embryonic heart development for complete heart looping. Required for cardiomyocyte differentiation. Specifically promotes the ubiquitination of SMAD9 and targets it for proteasomal degradation, leading to avoid excessive accumulation of SMAD9. Plays a role in the regulation of NK-cell migration by modulating protein levels of filamin A/FLNA via regulation of its ubiquitination and proteasome degradation. Functionally, involved in myogenic differentiation and targets filamin FLNB for proteasomal degradation but not filamin FLNA. Also targets DES for proteasomal degradation. Acts as a negative regulator of skeletal muscle mass. Its function is as follows. Targets filamins FLNA and FLNB for proteasomal degradation. This leads to enhanced adhesion of hematopoietic cells to fibronectin. Required for FLNA degradation in immature cardiomyocytes which is necessary for actin cytoskeleton remodeling, leading to proper organization of myofibrils and function of mature cardiomyocytes. Required for degradation of FLNA and FLNB in immature dendritic cells (DC) which enhances immature DC migration by promoting DC podosome formation and DC-mediated degradation of the extracellular matrix. Does not promote proteasomal degradation of tyrosine-protein kinases JAK1 or JAK2 in hematopoietic cells. The protein is Ankyrin repeat and SOCS box protein 2 of Mus musculus (Mouse).